The following is a 384-amino-acid chain: BTB and MATH domain-containing protein 34 (384 aa).

Residues 41 to 127 (LNGNTTLKRI…ELKFQKEQLK (87 aa)) adopt a coiled-coil conformation. Residues 167–277 (EFSHTFNSVA…VFNFGEYEEI (111 aa)) enclose the MATH domain. Positions 317-380 (SDAVMIVKDE…LYGEPALTGR (64 aa)) constitute a BTB domain.

The sequence is that of BTB and MATH domain-containing protein 34 (bath-34) from Caenorhabditis elegans.